Consider the following 126-residue polypeptide: Fluoride-specific ion channel FluC (126 aa).

The next 4 helical transmembrane spans lie at 4 to 24, 35 to 55, 67 to 87, and 97 to 117; these read SLLSIACGAVLGAWLRWFVGL, LGTILVNLVGGFIIGFAIALF, FVITGFCGALTTFSTFSAEVI, and FAIALITIHLMGSLLCTVLGL. Positions 74 and 77 each coordinate Na(+).

It belongs to the fluoride channel Fluc/FEX (TC 1.A.43) family.

It is found in the cell inner membrane. It carries out the reaction fluoride(in) = fluoride(out). With respect to regulation, na(+) is not transported, but it plays an essential structural role and its presence is essential for fluoride channel function. Fluoride-specific ion channel. Important for reducing fluoride concentration in the cell, thus reducing its toxicity. The polypeptide is Fluoride-specific ion channel FluC (Acinetobacter baylyi (strain ATCC 33305 / BD413 / ADP1)).